Consider the following 34-residue polypeptide: Phallacidin proprotein 1 (34 aa).

Residues 1-10 constitute a propeptide that is removed on maturation; it reads MSDINATRLP. Positions 11–17 form a cross-link, cyclopeptide (Ala-Pro); it reads AWLVDCP. A cross-link (2'-cysteinyl-6'-hydroxytryptophan sulfoxide (Trp-Cys)) is located at residues 12–16; it reads WLVDC. A propeptide spanning residues 18 to 34 is cleaved from the precursor; sequence CVGDDVNRLLTRGESLC.

Belongs to the MSDIN fungal toxin family. Processed by the macrocyclase-peptidase enzyme POPB to yield a toxic cyclic heptapeptide. POPB first removes 10 residues from the N-terminus. Conformational trapping of the remaining peptide forces the enzyme to release this intermediate rather than proceed to macrocyclization. The enzyme rebinds the remaining peptide in a different conformation and catalyzes macrocyclization of the N-terminal 7 residues.

Functionally, major toxin that belongs to the bicyclic heptapeptides called phallotoxins. Although structurally related to amatoxins, phallotoxins have a different mode of action, which is the stabilization of F-actin. Phallotoxins are poisonous when administered parenterally, but not orally because of poor absorption. This is Phallacidin proprotein 1 from Amanita bisporigera (Destroying angel).